A 302-amino-acid polypeptide reads, in one-letter code: Serine/threonine-protein phosphatase alpha-3 isoform (302 aa).

Residues aspartate 62, histidine 64, aspartate 90, and asparagine 122 each contribute to the Mn(2+) site. The active-site Proton donor is histidine 123. Histidine 171 and histidine 246 together coordinate Mn(2+).

It belongs to the PPP phosphatase family. PP-1 subfamily. Interacts with Nop17l. It depends on Mn(2+) as a cofactor.

It catalyses the reaction O-phospho-L-seryl-[protein] + H2O = L-seryl-[protein] + phosphate. It carries out the reaction O-phospho-L-threonyl-[protein] + H2O = L-threonyl-[protein] + phosphate. The chain is Serine/threonine-protein phosphatase alpha-3 isoform (Pp1-13C) from Drosophila melanogaster (Fruit fly).